A 235-amino-acid chain; its full sequence is MANLVIVRHGESVANQLKTYTGWSDVALTAKGRQQAHQVGRQIKDAGFQFSHVHTSLLKRAILTSYIVLEELDQLALPMTKSWRLNERHYGALRGLNKDTTRTIFGVHQVARWRRSYTALPPLLIRSSTARRYRLVPRKSRPRGESLAQATQRLLPYWQDQVVPGLLAGQDQLIVAHGSTLRALIKVIEQISDQAIDGVEVANGEALYYQFGTDLTVLKKGRLALGSETDEEKEN.

Substrate is bound by residues 8–15, 21–22, Arg60, 87–90, Lys98, and 114–115; these read RHGESVAN, TG, ERHY, and RR. His9 functions as the Tele-phosphohistidine intermediate in the catalytic mechanism. Glu87 serves as the catalytic Proton donor/acceptor.

This sequence belongs to the phosphoglycerate mutase family. BPG-dependent PGAM subfamily.

The enzyme catalyses (2R)-2-phosphoglycerate = (2R)-3-phosphoglycerate. The protein operates within carbohydrate degradation; glycolysis; pyruvate from D-glyceraldehyde 3-phosphate: step 3/5. Its function is as follows. Catalyzes the interconversion of 2-phosphoglycerate and 3-phosphoglycerate. The protein is 2,3-bisphosphoglycerate-dependent phosphoglycerate mutase 1 of Latilactobacillus sakei subsp. sakei (strain 23K) (Lactobacillus sakei subsp. sakei).